Consider the following 348-residue polypeptide: Methylthioribose-1-phosphate isomerase (348 aa).

Substrate is bound by residues 53–55, R93, and Q197; that span reads RGA. D238 serves as the catalytic Proton donor. 248–249 contributes to the substrate binding site; sequence NK.

This sequence belongs to the eIF-2B alpha/beta/delta subunits family. MtnA subfamily.

It catalyses the reaction 5-(methylsulfanyl)-alpha-D-ribose 1-phosphate = 5-(methylsulfanyl)-D-ribulose 1-phosphate. The protein operates within amino-acid biosynthesis; L-methionine biosynthesis via salvage pathway; L-methionine from S-methyl-5-thio-alpha-D-ribose 1-phosphate: step 1/6. In terms of biological role, catalyzes the interconversion of methylthioribose-1-phosphate (MTR-1-P) into methylthioribulose-1-phosphate (MTRu-1-P). The protein is Methylthioribose-1-phosphate isomerase of Gloeobacter violaceus (strain ATCC 29082 / PCC 7421).